A 239-amino-acid chain; its full sequence is Outer membrane protein PagN (239 aa).

The first 22 residues, 1-22, serve as a signal peptide directing secretion; that stretch reads MKNFFAVCIIPLVVAWSATASA. At 23–26 the chain is on the periplasmic side; it reads KEGI. A beta stranded transmembrane segment spans residues 27 to 36; it reads YITGKAGTSV. Residues 37–65 are Extracellular-facing; it reads VNVYGINSTFSQDEIVNGHATLPDRTKGV. Residues 66–76 traverse the membrane as a beta stranded segment; that stretch reads FGGGVAIGYDF. Topologically, residues 77 to 81 are periplasmic; that stretch reads YDPFQ. A beta stranded transmembrane segment spans residues 82–92; the sequence is LPVRLELDTTF. The Extracellular segment spans residues 93–120; it reads RGETDAKGGQDIIAFGDPVHINVKNQVR. The beta stranded transmembrane segment at 121–132 threads the bilayer; that stretch reads MTTYMVNGYYDF. The Periplasmic portion of the chain corresponds to 133 to 137; that stretch reads HNSTA. A beta stranded membrane pass occupies residues 138-148; that stretch reads FTPYISAGVGL. Residues 149 to 174 are Extracellular-facing; it reads AHVKLSNNTIPVGFGINETLSASKNN. A beta stranded membrane pass occupies residues 175-185; that stretch reads FAWGAGIGAKY. The Periplasmic portion of the chain corresponds to 186–190; the sequence is AVTDN. Residues 191–200 form a beta stranded membrane-spanning segment; the sequence is IMIDASYKYI. Over 201–230 the chain is Extracellular; it reads NAGKVSISKNHYAGDEHTAYDADTKAASND. A beta stranded transmembrane segment spans residues 231-239; it reads FMLGITYAF.

It localises to the cell outer membrane. Haemagglutinin that facilitates the adhesion to and invasion of epithelial mammalian cells. Utilizes heparinated proteoglycan as a receptor to successfully invade host cells. The sequence is that of Outer membrane protein PagN (pagN) from Salmonella typhimurium (strain LT2 / SGSC1412 / ATCC 700720).